Here is a 221-residue protein sequence, read N- to C-terminus: UPF0319 protein CGSHiEE_03630 (221 aa).

The first 21 residues, 1 to 21, serve as a signal peptide directing secretion; that stretch reads MKLRAVVLGLATLCTSTATFA.

Belongs to the UPF0319 family.

This Haemophilus influenzae (strain PittEE) protein is UPF0319 protein CGSHiEE_03630.